We begin with the raw amino-acid sequence, 300 residues long: Protein Bel-1 (300 aa).

The segment at 1–50 (MDSYEKEESVASTSGIQDLQTLSELVGPENAGEGELTIAEEPEENPRRPR) is disordered. Over residues 10–23 (VASTSGIQDLQTLS) the composition is skewed to polar residues. A DNA-binding region spans residues 89-200 (SKSLCKRLIL…SEGPKPRPRH (112 aa)). Residues 209–244 (FEKHHKPRQKRPRRRSIDNESCASSSDTMANEPGSL) are disordered. The segment covering 211–222 (KHHKPRQKRPRR) has biased composition (basic residues). The short motif at 214–223 (KPRQKRPRRR) is the Nuclear localization signal element. Positions 224 to 300 (SIDNESCASS…PSGSGEHSVL (77 aa)) are transactivation domain. Residues 227 to 237 (NESCASSSDTM) are compositionally biased toward polar residues.

As to quaternary structure, homodimer or homomultimer. Forms complexes with the host nuclear factors NFIA, NFIB, NFIC or NFIX.

Its subcellular location is the host nucleus. Functionally, transcriptional transactivator that activates the viral internal promoter (IP), thereby enhancing its own expression. This transactivation is repressed by nuclear factor I. Also transactivates the long terminal repeat (LTR) promoter, thereby inducing structural gene expression, initiating the late phase of infection. It is therefore a key regulator of viral gene expression. It directly binds to and activates DNA target sites of viral promoters and those of distinct cellular genes. Required for viral replication. The protein is Protein Bel-1 (bel1) of Human spumaretrovirus (SFVcpz(hu)).